The following is a 23-amino-acid chain: Unknown protein NF016 from 2D-PAGE (23 aa).

The sequence is that of Unknown protein NF016 from 2D-PAGE from Naegleria fowleri (Brain eating amoeba).